The chain runs to 339 residues: Transcription factor IIIA (339 aa).

C2H2-type zinc fingers lie at residues tyrosine 13 to histidine 37, phenylalanine 43 to histidine 67, phenylalanine 73 to histidine 98, tyrosine 105 to histidine 129, tyrosine 135 to histidine 159, tyrosine 162 to histidine 188, valine 192 to histidine 214, tyrosine 221 to histidine 246, and phenylalanine 252 to histidine 276. Composition is skewed to basic and acidic residues over residues valine 275 to proline 288 and lysine 305 to glutamate 316. Residues valine 275 to lysine 339 form a disordered region.

In terms of tissue distribution, synthesized in oocytes and, in much lower levels, in somatic cells.

Its subcellular location is the nucleus. Its function is as follows. Involved in ribosomal large subunit biogenesis. Interacts with the internal control region (ICR) of approximately 50 bases within the 5S RNA genes, is required for correct transcription of these genes by RNA polymerase III. Also binds the transcribed 5S RNA's. The polypeptide is Transcription factor IIIA (gtf3a) (Xenopus borealis (Kenyan clawed frog)).